A 273-amino-acid polypeptide reads, in one-letter code: Dermonecrotic toxin LsaSicTox-alphaIB1ai (273 aa).

H5 is an active-site residue. Mg(2+)-binding residues include E25 and D27. Residue H41 is the Nucleophile of the active site. 2 disulfides stabilise this stretch: C45–C51 and C47–C190. D85 contacts Mg(2+).

Belongs to the arthropod phospholipase D family. Class II subfamily. Mg(2+) is required as a cofactor. As to expression, expressed by the venom gland.

The protein localises to the secreted. The enzyme catalyses an N-(acyl)-sphingosylphosphocholine = an N-(acyl)-sphingosyl-1,3-cyclic phosphate + choline. The catalysed reaction is an N-(acyl)-sphingosylphosphoethanolamine = an N-(acyl)-sphingosyl-1,3-cyclic phosphate + ethanolamine. It carries out the reaction a 1-acyl-sn-glycero-3-phosphocholine = a 1-acyl-sn-glycero-2,3-cyclic phosphate + choline. It catalyses the reaction a 1-acyl-sn-glycero-3-phosphoethanolamine = a 1-acyl-sn-glycero-2,3-cyclic phosphate + ethanolamine. In terms of biological role, dermonecrotic toxins cleave the phosphodiester linkage between the phosphate and headgroup of certain phospholipids (sphingolipid and lysolipid substrates), forming an alcohol (often choline) and a cyclic phosphate. This toxin acts on sphingomyelin (SM). It may also act on ceramide phosphoethanolamine (CPE), lysophosphatidylcholine (LPC) and lysophosphatidylethanolamine (LPE), but not on lysophosphatidylserine (LPS), and lysophosphatidylglycerol (LPG). It acts by transphosphatidylation, releasing exclusively cyclic phosphate products as second products. Induces dermonecrosis, hemolysis, increased vascular permeability, edema, inflammatory response, and platelet aggregation. The protein is Dermonecrotic toxin LsaSicTox-alphaIB1ai of Loxosceles sabina (Tucson recluse spider).